The chain runs to 138 residues: Small ribosomal subunit protein uS11c (138 aa).

Positions 1–23 are disordered; it reads MKKPIPRIGSRRNGRIGSRKNGR.

This sequence belongs to the universal ribosomal protein uS11 family. As to quaternary structure, part of the 30S ribosomal subunit.

The protein resides in the plastid. Its subcellular location is the chloroplast. This chain is Small ribosomal subunit protein uS11c, found in Amborella trichopoda.